A 31-amino-acid polypeptide reads, in one-letter code: Cytochrome b6-f complex subunit 6 (31 aa).

The helical transmembrane segment at 4–24 (ITSYFGFLLAALTITSALFIG) threads the bilayer.

Belongs to the PetL family. The 4 large subunits of the cytochrome b6-f complex are cytochrome b6, subunit IV (17 kDa polypeptide, PetD), cytochrome f and the Rieske protein, while the 4 small subunits are PetG, PetL, PetM and PetN. The complex functions as a dimer.

It localises to the plastid. The protein localises to the chloroplast thylakoid membrane. Component of the cytochrome b6-f complex, which mediates electron transfer between photosystem II (PSII) and photosystem I (PSI), cyclic electron flow around PSI, and state transitions. PetL is important for photoautotrophic growth as well as for electron transfer efficiency and stability of the cytochrome b6-f complex. This Humulus lupulus (European hop) protein is Cytochrome b6-f complex subunit 6.